A 94-amino-acid chain; its full sequence is NADH dehydrogenase [ubiquinone] iron-sulfur protein 3, mitochondrial (94 aa).

Belongs to the complex I 30 kDa subunit family. In terms of assembly, core subunit of respiratory chain NADH dehydrogenase (Complex I) which is composed of 45 different subunits. Interacts with NDUFAF3. Interacts with RAB5IF. Found in subcomplexes containing subunits NDUFS2, MT-ND1 and NDUFA13.

It localises to the mitochondrion inner membrane. It catalyses the reaction a ubiquinone + NADH + 5 H(+)(in) = a ubiquinol + NAD(+) + 4 H(+)(out). Its function is as follows. Core subunit of the mitochondrial membrane respiratory chain NADH dehydrogenase (Complex I) which catalyzes electron transfer from NADH through the respiratory chain, using ubiquinone as an electron acceptor. Essential for the catalytic activity and assembly of complex I. This Mesocricetus auratus (Golden hamster) protein is NADH dehydrogenase [ubiquinone] iron-sulfur protein 3, mitochondrial.